A 342-amino-acid chain; its full sequence is MTLKAAILGASGYTGAELVRILATHPRIEIAALSADRKAGQGYDEVFPHLRHLKLPALVRMEEIDFSAIDLVFCALPHGLSQPLVGQLPRNVKIVDLGADFRLRDPADYKKWYGLDHAAPEVQPEAVYGLTEFYRDQIRGARLVAGTGCNAATVQFALRPLIGSGLIDLDDIICDLKNGVSGAGRSLKENMLFAERSEDVAGYSQGGKHRHLGEFDQEFSVLAGREVRIQFTPHLVPVNRGILASCYLKGEPQAVHAALAAAYADEPFIVVLPYGQLPAMAHVQGSNFCHIGVTGDRISGRALVVSTLDNLCKGSSGQAVQNANLMLGLPETEGLMLAPIFP.

Cys149 is an active-site residue.

This sequence belongs to the NAGSA dehydrogenase family. Type 1 subfamily.

Its subcellular location is the cytoplasm. It catalyses the reaction N-acetyl-L-glutamate 5-semialdehyde + phosphate + NADP(+) = N-acetyl-L-glutamyl 5-phosphate + NADPH + H(+). It functions in the pathway amino-acid biosynthesis; L-arginine biosynthesis; N(2)-acetyl-L-ornithine from L-glutamate: step 3/4. Catalyzes the NADPH-dependent reduction of N-acetyl-5-glutamyl phosphate to yield N-acetyl-L-glutamate 5-semialdehyde. This Paracoccus denitrificans (strain Pd 1222) protein is N-acetyl-gamma-glutamyl-phosphate reductase.